The following is a 509-amino-acid chain: Steroid 17-alpha-hydroxylase/17,20 lyase (509 aa).

Position 445 (Cys445) interacts with heme.

The protein belongs to the cytochrome P450 family. Heme serves as cofactor.

The protein resides in the membrane. It carries out the reaction a C21-steroid + reduced [NADPH--hemoprotein reductase] + O2 = a 17alpha-hydroxy-C21-steroid + oxidized [NADPH--hemoprotein reductase] + H2O + H(+). The enzyme catalyses 17alpha-hydroxyprogesterone + reduced [NADPH--hemoprotein reductase] + O2 = androst-4-ene-3,17-dione + acetate + oxidized [NADPH--hemoprotein reductase] + H2O + 2 H(+). The catalysed reaction is 17alpha-hydroxypregnenolone + reduced [NADPH--hemoprotein reductase] + O2 = 3beta-hydroxyandrost-5-en-17-one + acetate + oxidized [NADPH--hemoprotein reductase] + H2O + 2 H(+). It participates in lipid metabolism; steroid biosynthesis. Functionally, conversion of pregnenolone and progesterone to their 17-alpha-hydroxylated products and subsequently to dehydroepiandrosterone (DHEA) and androstenedione. Catalyzes both the 17-alpha-hydroxylation and the 17,20-lyase reaction. The sequence is that of Steroid 17-alpha-hydroxylase/17,20 lyase (CYP17A1) from Squalus acanthias (Spiny dogfish).